The following is a 393-amino-acid chain: Formate-dependent phosphoribosylglycinamide formyltransferase (393 aa).

Residues 22 to 23 (EL) and E82 each bind N(1)-(5-phospho-beta-D-ribosyl)glycinamide. ATP is bound by residues R114, K155, 160–165 (SSGKGQ), 195–198 (EGFI), and E203. Residues 119–308 (RLAAEELDLP…QFALHARAIL (190 aa)) form the ATP-grasp domain. Mg(2+)-binding residues include E267 and E279. Residues D286, K356, and 363–364 (RR) each bind N(1)-(5-phospho-beta-D-ribosyl)glycinamide.

This sequence belongs to the PurK/PurT family. Homodimer.

It carries out the reaction N(1)-(5-phospho-beta-D-ribosyl)glycinamide + formate + ATP = N(2)-formyl-N(1)-(5-phospho-beta-D-ribosyl)glycinamide + ADP + phosphate + H(+). It functions in the pathway purine metabolism; IMP biosynthesis via de novo pathway; N(2)-formyl-N(1)-(5-phospho-D-ribosyl)glycinamide from N(1)-(5-phospho-D-ribosyl)glycinamide (formate route): step 1/1. Involved in the de novo purine biosynthesis. Catalyzes the transfer of formate to 5-phospho-ribosyl-glycinamide (GAR), producing 5-phospho-ribosyl-N-formylglycinamide (FGAR). Formate is provided by PurU via hydrolysis of 10-formyl-tetrahydrofolate. This Pseudomonas entomophila (strain L48) protein is Formate-dependent phosphoribosylglycinamide formyltransferase.